The following is a 570-amino-acid chain: MKASQFFISTLKEAPAEAALASHKLMIRAGLIKANASGLYTWMPMGLRVLRKVENVVREEMARAGSVELLMPVVQPAELWQESGRWEFYGKELLRLKDRHDRDFCMGPTCEEVIADIVRKEINSYKQLPKNFYHIQTKFRDEVRPRFGVMRAREFVMKDAYSFHADYASLQTTYDAMYDAYCRIFTRLGLAFRPVAADTGSIGGTGSHEFQVLAESGEDVIAYSDTSDYAANIELAPTLPLKGERTAAQAELTKVHTPNVKTIESLVEFLNIPVEQTLKSIVVESENEGEIVLLLLRGDHEFNDIKAEKLAGVKSPLTMASSAAIVEQFGANGGSLGPVGFKGKVYADFATEKGADWVIGANEDGYHYTGFNFGRDAAEPEFVDLRNVVEGDESPDGQGRLKLARGIEVGHVFQLRDKYTQAMNVSFLDNNGKSQIMEMGCYGIGITRVVAAAIEQNNDEKGIIWTKAMAPFEVVIVPMNYKKSDAVREAADKIYAELLAAGADVLLDDRDERAGVLLNDSELLGIPHRIVIGDRALKEGNVEYAERRNNEAQAVAIGEIVARVTASLNG.

Belongs to the class-II aminoacyl-tRNA synthetase family. ProS type 1 subfamily. As to quaternary structure, homodimer.

It is found in the cytoplasm. The enzyme catalyses tRNA(Pro) + L-proline + ATP = L-prolyl-tRNA(Pro) + AMP + diphosphate. Its function is as follows. Catalyzes the attachment of proline to tRNA(Pro) in a two-step reaction: proline is first activated by ATP to form Pro-AMP and then transferred to the acceptor end of tRNA(Pro). As ProRS can inadvertently accommodate and process non-cognate amino acids such as alanine and cysteine, to avoid such errors it has two additional distinct editing activities against alanine. One activity is designated as 'pretransfer' editing and involves the tRNA(Pro)-independent hydrolysis of activated Ala-AMP. The other activity is designated 'posttransfer' editing and involves deacylation of mischarged Ala-tRNA(Pro). The misacylated Cys-tRNA(Pro) is not edited by ProRS. The sequence is that of Proline--tRNA ligase from Neisseria meningitidis serogroup C / serotype 2a (strain ATCC 700532 / DSM 15464 / FAM18).